The following is a 346-amino-acid chain: Putative alpha/beta hydrolase R526 (346 aa).

Belongs to the AB hydrolase 3 family.

The protein localises to the virion. The protein is Putative alpha/beta hydrolase R526 of Acanthamoeba polyphaga mimivirus (APMV).